Here is a 228-residue protein sequence, read N- to C-terminus: U1 small nuclear ribonucleoprotein C-2 (228 aa).

A Matrin-type zinc finger spans residues 4–36 (YYCDYCDTYLTHDSPSVRKQHNAGYKHKANVRT). Residues 105–228 (PGVRPPILPA…SYALPSEGNH (124 aa)) are disordered. 2 stretches are compositionally biased toward pro residues: residues 107 to 156 (VRPP…PPGS) and 164 to 175 (LPRPPTLPPPTS). A compositionally biased stretch (low complexity) spans 178–190 (PGAPIPNSAAPPA). The span at 196-214 (PPAPAGPTSGAPPAPPTAP) shows a compositional bias: pro residues.

This sequence belongs to the U1 small nuclear ribonucleoprotein C family. In terms of assembly, U1 snRNP is composed of the 7 core Sm proteins B/B', D1, D2, D3, E, F and G that assemble in a heptameric protein ring on the Sm site of the small nuclear RNA to form the core snRNP, and at least 3 U1 snRNP-specific proteins U1-70K, U1-A and U1-C. U1-C interacts with U1 snRNA and the 5' splice-site region of the pre-mRNA.

The protein resides in the nucleus. In terms of biological role, component of the spliceosomal U1 snRNP, which is essential for recognition of the pre-mRNA 5' splice-site and the subsequent assembly of the spliceosome. U1-C is directly involved in initial 5' splice-site recognition for both constitutive and regulated alternative splicing. The interaction with the 5' splice-site seems to precede base-pairing between the pre-mRNA and the U1 snRNA. Stimulates commitment or early (E) complex formation by stabilizing the base pairing of the 5' end of the U1 snRNA and the 5' splice-site region. The sequence is that of U1 small nuclear ribonucleoprotein C-2 from Sorghum bicolor (Sorghum).